Reading from the N-terminus, the 63-residue chain is Metallothionein-like protein type 3 (63 aa).

This sequence belongs to the metallothionein superfamily. Type 15 family.

Functionally, metallothioneins have a high content of cysteine residues that bind various heavy metals. This chain is Metallothionein-like protein type 3, found in Actinidia deliciosa (Kiwi).